Consider the following 148-residue polypeptide: MRSYSFWFLTAFLVFATLALGEAVKGGKEKWGNCPAEKGSCIKSGPSQCHADNDCPGDKKCCFLSCSFKCVSPDRIRKEGGNEDEDVSRSSPEPGGEPRPPGSSPSTSILSYYAVSFPPPGIGQMAPVPQGAESWNVGQEASPQKEWS.

An N-terminal signal peptide occupies residues Met-1 to Ala-23. Residues Gly-27 to Asp-74 form the WAP domain. 4 disulfides stabilise this stretch: Cys-34-Cys-62, Cys-41-Cys-66, Cys-49-Cys-61, and Cys-55-Cys-70. Residues Asp-74–Ser-148 are disordered.

The protein localises to the secreted. Functionally, antibacterial protein. Putative acid-stable proteinase inhibitor. The protein is WAP four-disulfide core domain protein 12 (WFDC12) of Lemur catta (Ring-tailed lemur).